Here is a 373-residue protein sequence, read N- to C-terminus: MSESGFFLDAVGLSVGDIVALTGATPRDGADLSRAISDLAPLDRAGIADLSFIAETKYAGVLAATQAGAVLTTERFAHLAPESVAVLRIAKPYEAFVAVARRLYPSALRPTSLFGTLGVAPGAVVHPSAKLAAGVTVDPGAVIGPRAEIGKGSLIGANAVIGPHVKIGADCAIGAGCTVTHSEIGDRVIVHPGSQIGQDGFGYISSANGHTKVPQIGRVVIHDDVEIGAGSNIDRGGMRDTVIGQGTKIDNLCQIGHNCVIGRHCIIVAQSGLSGSVTVEDFAVLGARTGVIPHITIGKGAMLASRSTVYSNVPAGAVWGGFPAQSKRQWMREVVALRQLAARDHDGRTAASAEAAAPSSDATGVDQPDQAAS.

His257 (proton acceptor) is an active-site residue. The disordered stretch occupies residues 346–373; that stretch reads DGRTAASAEAAAPSSDATGVDQPDQAAS. A compositionally biased stretch (low complexity) spans 350–362; the sequence is AASAEAAAPSSDA.

It belongs to the transferase hexapeptide repeat family. LpxD subfamily. As to quaternary structure, homotrimer.

The catalysed reaction is a UDP-3-O-[(3R)-3-hydroxyacyl]-alpha-D-glucosamine + a (3R)-hydroxyacyl-[ACP] = a UDP-2-N,3-O-bis[(3R)-3-hydroxyacyl]-alpha-D-glucosamine + holo-[ACP] + H(+). It participates in bacterial outer membrane biogenesis; LPS lipid A biosynthesis. In terms of biological role, catalyzes the N-acylation of UDP-3-O-acylglucosamine using 3-hydroxyacyl-ACP as the acyl donor. Is involved in the biosynthesis of lipid A, a phosphorylated glycolipid that anchors the lipopolysaccharide to the outer membrane of the cell. The sequence is that of UDP-3-O-acylglucosamine N-acyltransferase 2 from Rhodopseudomonas palustris (strain BisB18).